The chain runs to 217 residues: Probable transaldolase (217 aa).

Lys83 (schiff-base intermediate with substrate) is an active-site residue.

It belongs to the transaldolase family. Type 3B subfamily.

It localises to the cytoplasm. The catalysed reaction is D-sedoheptulose 7-phosphate + D-glyceraldehyde 3-phosphate = D-erythrose 4-phosphate + beta-D-fructose 6-phosphate. It functions in the pathway carbohydrate degradation; pentose phosphate pathway; D-glyceraldehyde 3-phosphate and beta-D-fructose 6-phosphate from D-ribose 5-phosphate and D-xylulose 5-phosphate (non-oxidative stage): step 2/3. Its function is as follows. Transaldolase is important for the balance of metabolites in the pentose-phosphate pathway. This Lactiplantibacillus plantarum (strain ATCC BAA-793 / NCIMB 8826 / WCFS1) (Lactobacillus plantarum) protein is Probable transaldolase.